A 376-amino-acid polypeptide reads, in one-letter code: MGIKGLSKLLARYAPKSMKEGKIDQYSGRVIAIDASILVYQFISAVRDTTGATMVDEFGETTSHIIGTFYRTIKLIESGIKPVYVFDGKPPEMKDGELNKRKENAQKAQEQLDKALEEGDKEQAKKLMKRTARMTKEQSDEVKKLLQLMGIPCVEANCEAEGTCAALVKAGKCYATATEDMDALTLGSEYVVRKFSASDNKKEPIREYSLSSILEETGFSMEQFIDLCILLGCDYCDTIKGVGPITAFELIQQYKSIENVLKHLSDKYKVPENWKYKEARELFLHPDVADFSDYKLEWNKLDEEGIKQYLVTEKHFNEERVTKGIEKLKNVKSKKAQGRLDSFFSVKKVPLSKSEAASGVKRKKPTTKAKESRKKK.

The segment at Met-1–Ala-105 is N-domain. Asp-34 contributes to the Mg(2+) binding site. 2 residues coordinate DNA: Arg-47 and Arg-71. Positions 87, 159, 161, 180, and 182 each coordinate Mg(2+). The I-domain stretch occupies residues Gln-123–Tyr-254. A DNA-binding site is contributed by Glu-159. 2 residues coordinate DNA: Gly-232 and Asp-234. Asp-234 contributes to the Mg(2+) binding site. Residues Ala-336–Phe-344 form an interaction with PCNA region. The segment at Ser-352–Lys-376 is disordered. Positions Val-360 to Lys-376 are enriched in basic residues.

This sequence belongs to the XPG/RAD2 endonuclease family. FEN1 subfamily. In terms of assembly, interacts with PCNA. Three molecules of FEN1 bind to one PCNA trimer with each molecule binding to one PCNA monomer. PCNA stimulates the nuclease activity without altering cleavage specificity. The cofactor is Mg(2+). Phosphorylated. Phosphorylation upon DNA damage induces relocalization to the nuclear plasma.

The protein localises to the nucleus. The protein resides in the nucleolus. Its subcellular location is the nucleoplasm. It is found in the mitochondrion. In terms of biological role, structure-specific nuclease with 5'-flap endonuclease and 5'-3' exonuclease activities involved in DNA replication and repair. During DNA replication, cleaves the 5'-overhanging flap structure that is generated by displacement synthesis when DNA polymerase encounters the 5'-end of a downstream Okazaki fragment. It enters the flap from the 5'-end and then tracks to cleave the flap base, leaving a nick for ligation. Also involved in the long patch base excision repair (LP-BER) pathway, by cleaving within the apurinic/apyrimidinic (AP) site-terminated flap. Acts as a genome stabilization factor that prevents flaps from equilibrating into structures that lead to duplications and deletions. Also possesses 5'-3' exonuclease activity on nicked or gapped double-stranded DNA, and exhibits RNase H activity. Also involved in replication and repair of rDNA and in repairing mitochondrial DNA. The sequence is that of Flap endonuclease 1 from Entamoeba dispar (strain ATCC PRA-260 / SAW760).